Here is a 270-residue protein sequence, read N- to C-terminus: Cbp/p300-interacting transactivator 2 (270 aa).

A disordered region spans residues 138 to 201 (LHPAAGHQMN…SGGGSGSGNM (64 aa)). Over residues 165 to 198 (STPGGSGGSSTPGGSGSSSGGGAGSSNSGGGSGS) the composition is skewed to gly residues.

This sequence belongs to the CITED family. Interacts (via C-terminus) with SMAD2. Interacts (via C-terminus) with SMAD3 (via MH2 domain). Interacts with LHX2 (via LIM domains). Interacts with WT1. Interacts (via C-terminus) with EP300 (via CH1 domain); the interaction is stimulated in response to hypoxia. Interacts with PPARA. Interacts (via C-terminus) with TFAP2A, TFAP2B and TFAP2C.

The protein localises to the nucleus. Transcriptional coactivator of the p300/CBP-mediated transcription complex. Acts as a bridge, linking TFAP2 transcription factors and the p300/CBP transcriptional coactivator complex in order to stimulate TFAP2-mediated transcriptional activation. Positively regulates TGF-beta signaling through its association with the SMAD/p300/CBP-mediated transcriptional coactivator complex. Stimulates the peroxisome proliferator-activated receptors PPARA transcriptional activity. Enhances estrogen-dependent transactivation mediated by estrogen receptors. Also acts as a transcriptional corepressor; interferes with the binding of the transcription factors HIF1A or STAT2 and the p300/CBP transcriptional coactivator complex. Participates in sex determination and early gonad development by stimulating transcription activation of SRY. Plays a role in controlling left-right patterning during embryogenesis; potentiates transcriptional activation of NODAL-mediated gene transcription in the left lateral plate mesoderm (LPM). Plays an essential role in differentiation of the adrenal cortex from the adrenogonadal primordium (AGP); stimulates WT1-mediated transcription activation thereby up-regulating the nuclear hormone receptor NR5A1 promoter activity. Associates with chromatin to the PITX2 P1 promoter region. The chain is Cbp/p300-interacting transactivator 2 (CITED2) from Homo sapiens (Human).